The following is a 386-amino-acid chain: MKVISLKKDSFNKGGAVITLLPEDKEDLFTVYQIVDKDDELIFKKKFTSKLDEAGKKKSTDLVKLKIKVISEDFDMKDEYLKYKGVTVTDESGASNVDIPVGKYLSFTLDYVYPFTIIKQNFNKFMQKLLNEACNIEYKSDTAAVVLQEGIAHVCLVTSSSTILKQKIEYSMPKKKRTTDVLKFDEKTEKFYKAIYSAMKKDLNFDKLKTIILCSPGFYAKILMDKIFQYAEEEHNKKILDNKGMFFIAHCSTGYLQGINEVLKNPLYASKLQDTKYSKEIMVMDEFLLHLNKDDDKAWYGEKEVVKAAEYGAISYLLLTDKVLHSDNIAQREEYLKLMDSVESNGGKALVLSTLHSLGEELDQLTGIACILKYPLPDLDEDDGEE.

The protein belongs to the eukaryotic release factor 1 family. Pelota subfamily. As to quaternary structure, monomer. Component of the Dom34-Hbs1 complex, also named Pelota-HBS1L complex, composed of DOM34 and HBS1. A divalent metal cation serves as cofactor.

It localises to the cytoplasm. Functionally, component of the Dom34-Hbs1 complex, a complex that recognizes stalled ribosomes and triggers the No-Go Decay (NGD) pathway. In the Dom34-Hbs1 complex, DOM34 recognizes ribosomes stalled at the 3' end of an mRNA and engages stalled ribosomes by destabilizing mRNA in the mRNA channel. Following ribosome-binding, the Dom34-Hbs1 complex promotes the disassembly of stalled ribosomes, followed by degradation of damaged mRNAs as part of the NGD pathway. The Dom34-Hbs1 complex is also involved in non-functional rRNA decay. This is Protein DOM34 from Saccharomyces cerevisiae (strain ATCC 204508 / S288c) (Baker's yeast).